Reading from the N-terminus, the 156-residue chain is SsrA-binding protein (156 aa).

The disordered stretch occupies residues 127 to 156 (GKKKYDKREDLKKKDAKRDVDRAMRDRQKY). A compositionally biased stretch (basic and acidic residues) spans 132–156 (DKREDLKKKDAKRDVDRAMRDRQKY).

Belongs to the SmpB family.

It localises to the cytoplasm. In terms of biological role, required for rescue of stalled ribosomes mediated by trans-translation. Binds to transfer-messenger RNA (tmRNA), required for stable association of tmRNA with ribosomes. tmRNA and SmpB together mimic tRNA shape, replacing the anticodon stem-loop with SmpB. tmRNA is encoded by the ssrA gene; the 2 termini fold to resemble tRNA(Ala) and it encodes a 'tag peptide', a short internal open reading frame. During trans-translation Ala-aminoacylated tmRNA acts like a tRNA, entering the A-site of stalled ribosomes, displacing the stalled mRNA. The ribosome then switches to translate the ORF on the tmRNA; the nascent peptide is terminated with the 'tag peptide' encoded by the tmRNA and targeted for degradation. The ribosome is freed to recommence translation, which seems to be the essential function of trans-translation. The polypeptide is SsrA-binding protein (Exiguobacterium sp. (strain ATCC BAA-1283 / AT1b)).